Reading from the N-terminus, the 310-residue chain is tRNA-cytidine(32) 2-sulfurtransferase (310 aa).

The PP-loop motif motif lies at 44-49; it reads SGGKDS. Positions 119, 122, and 210 each coordinate [4Fe-4S] cluster.

Belongs to the TtcA family. In terms of assembly, homodimer. Mg(2+) serves as cofactor. Requires [4Fe-4S] cluster as cofactor.

The protein resides in the cytoplasm. It catalyses the reaction cytidine(32) in tRNA + S-sulfanyl-L-cysteinyl-[cysteine desulfurase] + AH2 + ATP = 2-thiocytidine(32) in tRNA + L-cysteinyl-[cysteine desulfurase] + A + AMP + diphosphate + H(+). It participates in tRNA modification. Its function is as follows. Catalyzes the ATP-dependent 2-thiolation of cytidine in position 32 of tRNA, to form 2-thiocytidine (s(2)C32). The sulfur atoms are provided by the cysteine/cysteine desulfurase (IscS) system. This Saccharophagus degradans (strain 2-40 / ATCC 43961 / DSM 17024) protein is tRNA-cytidine(32) 2-sulfurtransferase.